The following is a 200-amino-acid chain: Large ribosomal subunit protein bL25 (200 aa).

This sequence belongs to the bacterial ribosomal protein bL25 family. CTC subfamily. In terms of assembly, part of the 50S ribosomal subunit; part of the 5S rRNA/L5/L18/L25 subcomplex. Contacts the 5S rRNA. Binds to the 5S rRNA independently of L5 and L18.

Functionally, this is one of the proteins that binds to the 5S RNA in the ribosome where it forms part of the central protuberance. This Pseudomonas fluorescens (strain Pf0-1) protein is Large ribosomal subunit protein bL25.